A 192-amino-acid chain; its full sequence is Thymidine kinase (192 aa).

ATP contacts are provided by residues 9–16 (SAMNAGKS) and 87–90 (DECQ). Glu-88 functions as the Proton acceptor in the catalytic mechanism. Zn(2+) contacts are provided by Cys-145, Cys-147, Cys-182, and His-185.

Belongs to the thymidine kinase family. In terms of assembly, homotetramer.

Its subcellular location is the cytoplasm. The catalysed reaction is thymidine + ATP = dTMP + ADP + H(+). This is Thymidine kinase from Photobacterium profundum (strain SS9).